The chain runs to 373 residues: ORC1-type DNA replication protein 2 (373 aa).

ATP contacts are provided by residues 63–67 (TGKTS), tyrosine 205, and arginine 217.

This sequence belongs to the CDC6/cdc18 family.

Its function is as follows. Involved in regulation of DNA replication. The polypeptide is ORC1-type DNA replication protein 2 (cdc6-2) (Methanosarcina acetivorans (strain ATCC 35395 / DSM 2834 / JCM 12185 / C2A)).